Here is a 397-residue protein sequence, read N- to C-terminus: Penicillopepsin-1 (397 aa).

The signal sequence occupies residues 1-20 (MVVFSQVTVALTCFSAIASA). The propeptide at 21–71 (AAVRQEPPQGFTVNQVQKAVPGTRTVNLPGLYANALVKYGATVPATVHAAA) is activation peptide. A Peptidase A1 domain is found at 87–394 (YLTPVTIGSS…DSEGPRLGFA (308 aa)). Residues D103 and D285 contribute to the active site. A glycan (N-linked (GlcNAc...) asparagine) is linked at N311. C322 and C357 are joined by a disulfide.

Belongs to the peptidase A1 family. As to quaternary structure, monomer.

The protein localises to the secreted. It carries out the reaction Hydrolysis of proteins with broad specificity similar to that of pepsin A, preferring hydrophobic residues at P1 and P1', but also cleaving 20-Gly-|-Glu-21 in the B chain of insulin. Clots milk, and activates trypsinogen.. Functionally, secreted aspartic endopeptidase that allows assimilation of proteinaceous substrates. The scissile peptide bond is attacked by a nucleophilic water molecule activated by two aspartic residues in the active site. Shows a broad primary substrate specificity. Favors hydrophobic residues at the P1 and P1' positions, but can also activate trypsinogen and hydrolyze the B chain of insulin between positions 'Gly-20' and 'Glu-21'. The sequence is that of Penicillopepsin-1 from Penicillium roqueforti.